The following is a 551-amino-acid chain: Serine beta-lactamase-like protein LACTB, mitochondrial (551 aa).

A mitochondrion-targeting transit peptide spans 1–113 (MYRLLSSVTA…RAIESSRDLL (113 aa)). The disordered stretch occupies residues 69-101 (PADPEASGTTELSHEQALSPGSPHTPAPPAARG). Ser-162 (acyl-ester intermediate) is an active-site residue. A disordered region spans residues 237 to 287 (LKMVKGTPPPSDQEKELKEKGGKNNEKSDAPKAKVEQDSEARCRSAKPGKK). Positions 248-279 (DQEKELKEKGGKNNEKSDAPKAKVEQDSEARC) are enriched in basic and acidic residues. Lys-287 and Lys-288 each carry N6-succinyllysine. N6-acetyllysine is present on residues Lys-301 and Lys-346.

The protein belongs to the peptidase S12 family. Expressed predominantly in liver.

It localises to the mitochondrion. In terms of biological role, mitochondrial serine protease that acts as a regulator of mitochondrial lipid metabolism. Acts by decreasing protein levels of PISD, a mitochondrial enzyme that converts phosphatidylserine (PtdSer) to phosphatidylethanolamine (PtdEtn), thereby affecting mitochondrial lipid metabolism. It is unclear whether it acts directly by mediating proteolysis of PISD or by mediating proteolysis of another lipid metabolism protein. Acts as a tumor suppressor that has the ability to inhibit proliferation of multiple types of cancer cells: probably by promoting decreased levels of PISD, thereby affecting mitochondrial lipid metabolism. The sequence is that of Serine beta-lactamase-like protein LACTB, mitochondrial from Mus musculus (Mouse).